Here is a 333-residue protein sequence, read N- to C-terminus: Biotin synthase (333 aa).

The Radical SAM core domain maps to 51-281 (HFGNQVSLCG…DVHITICGGR (231 aa)). Cys-69, Cys-73, and Cys-76 together coordinate [4Fe-4S] cluster. [2Fe-2S] cluster is bound at residue Cys-206.

This sequence belongs to the radical SAM superfamily. Biotin synthase family. As to quaternary structure, homodimer. [4Fe-4S] cluster is required as a cofactor. It depends on [2Fe-2S] cluster as a cofactor.

It carries out the reaction (4R,5S)-dethiobiotin + (sulfur carrier)-SH + 2 reduced [2Fe-2S]-[ferredoxin] + 2 S-adenosyl-L-methionine = (sulfur carrier)-H + biotin + 2 5'-deoxyadenosine + 2 L-methionine + 2 oxidized [2Fe-2S]-[ferredoxin]. It participates in cofactor biosynthesis; biotin biosynthesis; biotin from 7,8-diaminononanoate: step 2/2. Its function is as follows. Catalyzes the conversion of dethiobiotin (DTB) to biotin by the insertion of a sulfur atom into dethiobiotin via a radical-based mechanism. In Trichlorobacter lovleyi (strain ATCC BAA-1151 / DSM 17278 / SZ) (Geobacter lovleyi), this protein is Biotin synthase.